A 221-amino-acid chain; its full sequence is Thymine/uracil-DNA glycosylase (221 aa).

In terms of domain architecture, HhH spans 105–133 (DYGGRVPRNRKAILDLPGVGKYTCAAVMC). Residues C197, C204, C207, and C213 each coordinate [4Fe-4S] cluster.

Belongs to the Nth/MutY family. [4Fe-4S] cluster is required as a cofactor.

It carries out the reaction Hydrolyzes mismatched double-stranded DNA and polynucleotides, releasing free thymine.. DNA glycosylase that excises thymine from T/G mismatches and uracil from U/G mismatches. Acts as a repair enzyme able to counteract the mutagenic effect of spontaneous hydrolytic deamination of DNA 5-methylcytosine (5-meC) residues that leads to the formation of T/G mismatches. May also repair U/G mismatches arising from hydrolytic deamination of DNA cytosine residues. G/G, A/G, T/C and U/C are minor substrates. This chain is Thymine/uracil-DNA glycosylase, found in Methanothermobacter thermautotrophicus (Methanobacterium thermoformicicum).